The sequence spans 394 residues: NAD(P)H-quinone oxidoreductase subunit H (394 aa).

This sequence belongs to the complex I 49 kDa subunit family. NDH-1 can be composed of about 15 different subunits; different subcomplexes with different compositions have been identified which probably have different functions.

It localises to the cellular thylakoid membrane. It catalyses the reaction a plastoquinone + NADH + (n+1) H(+)(in) = a plastoquinol + NAD(+) + n H(+)(out). It carries out the reaction a plastoquinone + NADPH + (n+1) H(+)(in) = a plastoquinol + NADP(+) + n H(+)(out). In terms of biological role, NDH-1 shuttles electrons from an unknown electron donor, via FMN and iron-sulfur (Fe-S) centers, to quinones in the respiratory and/or the photosynthetic chain. The immediate electron acceptor for the enzyme in this species is believed to be plastoquinone. Couples the redox reaction to proton translocation, and thus conserves the redox energy in a proton gradient. Cyanobacterial NDH-1 also plays a role in inorganic carbon-concentration. The chain is NAD(P)H-quinone oxidoreductase subunit H from Prochlorococcus marinus (strain MIT 9313).